Consider the following 144-residue polypeptide: Large ribosomal subunit protein uL16 (144 aa).

It belongs to the universal ribosomal protein uL16 family. As to quaternary structure, part of the 50S ribosomal subunit.

Functionally, binds 23S rRNA and is also seen to make contacts with the A and possibly P site tRNAs. In Thermoanaerobacter sp. (strain X514), this protein is Large ribosomal subunit protein uL16.